Reading from the N-terminus, the 30-residue chain is Cysteine-rich venom protein mossambin (30 aa).

The interval 1–30 is disordered; the sequence is NVDFNSESTRRKKKQNEIVDLHNSLRRTVN.

This sequence belongs to the CRISP family. Post-translationally, contains 8 disulfide bonds. In terms of tissue distribution, expressed by the venom gland.

The protein resides in the secreted. Its function is as follows. Inhibits calcium-activated potassium channels (KCa), voltage-gated potassium channel (Kv), and the calcium release channel/ryanodine receptor (RyR). The protein is Cysteine-rich venom protein mossambin of Naja mossambica (Mozambique spitting cobra).